The primary structure comprises 92 residues: Large ribosomal subunit protein bL25 (92 aa).

Belongs to the bacterial ribosomal protein bL25 family. Part of the 50S ribosomal subunit; part of the 5S rRNA/L5/L18/L25 subcomplex. Contacts the 5S rRNA. Binds to the 5S rRNA independently of L5 and L18.

Its function is as follows. This is one of the proteins that binds to the 5S RNA in the ribosome where it forms part of the central protuberance. The sequence is that of Large ribosomal subunit protein bL25 from Aliivibrio fischeri (strain ATCC 700601 / ES114) (Vibrio fischeri).